Here is a 285-residue protein sequence, read N- to C-terminus: Elongation factor Ts (285 aa).

The interval 82-85 (TDFV) is involved in Mg(2+) ion dislocation from EF-Tu.

It belongs to the EF-Ts family.

It localises to the cytoplasm. Functionally, associates with the EF-Tu.GDP complex and induces the exchange of GDP to GTP. It remains bound to the aminoacyl-tRNA.EF-Tu.GTP complex up to the GTP hydrolysis stage on the ribosome. In Yersinia pseudotuberculosis serotype O:1b (strain IP 31758), this protein is Elongation factor Ts.